We begin with the raw amino-acid sequence, 547 residues long: Putative cysteine ligase BshC (547 aa).

The stretch at 462 to 484 (NLAEENLDRVIAQARFLRQKVEH) forms a coiled coil.

This sequence belongs to the BshC family.

Its function is as follows. Involved in bacillithiol (BSH) biosynthesis. May catalyze the last step of the pathway, the addition of cysteine to glucosamine malate (GlcN-Mal) to generate BSH. The sequence is that of Putative cysteine ligase BshC from Heliobacterium modesticaldum (strain ATCC 51547 / Ice1).